The sequence spans 475 residues: Aspartyl/glutamyl-tRNA(Asn/Gln) amidotransferase subunit B (475 aa).

Belongs to the GatB/GatE family. GatB subfamily. Heterotrimer of A, B and C subunits.

The catalysed reaction is L-glutamyl-tRNA(Gln) + L-glutamine + ATP + H2O = L-glutaminyl-tRNA(Gln) + L-glutamate + ADP + phosphate + H(+). It carries out the reaction L-aspartyl-tRNA(Asn) + L-glutamine + ATP + H2O = L-asparaginyl-tRNA(Asn) + L-glutamate + ADP + phosphate + 2 H(+). Functionally, allows the formation of correctly charged Asn-tRNA(Asn) or Gln-tRNA(Gln) through the transamidation of misacylated Asp-tRNA(Asn) or Glu-tRNA(Gln) in organisms which lack either or both of asparaginyl-tRNA or glutaminyl-tRNA synthetases. The reaction takes place in the presence of glutamine and ATP through an activated phospho-Asp-tRNA(Asn) or phospho-Glu-tRNA(Gln). The sequence is that of Aspartyl/glutamyl-tRNA(Asn/Gln) amidotransferase subunit B from Helicobacter pylori (strain HPAG1).